Here is a 106-residue protein sequence, read N- to C-terminus: U1-lycotoxin-Ls1b (106 aa).

The N-terminal stretch at 1–19 is a signal peptide; that stretch reads MKVLVVVALLVTLISYSSS. The propeptide occupies 20–40; that stretch reads EGIDDLEADELLSLMANEQTR. Cystine bridges form between C43-C58, C50-C67, C57-C85, and C69-C83.

This sequence belongs to the neurotoxin 19 (CSTX) family. 04 (U1-Lctx) subfamily. As to expression, expressed by the venom gland.

The protein resides in the secreted. The protein is U1-lycotoxin-Ls1b of Lycosa singoriensis (Wolf spider).